The primary structure comprises 266 residues: Undecaprenyl-diphosphatase (266 aa).

A run of 7 helical transmembrane segments spans residues 41 to 61 (NLAF…VILW), 82 to 102 (YVIN…FFKD), 106 to 126 (AIFG…AALL), 140 to 160 (ISMK…LPGL), 180 to 200 (LAQF…LLDG), 213 to 233 (IPTL…CLAC), and 245 to 265 (LIYF…VSQL).

The protein belongs to the UppP family.

Its subcellular location is the cell inner membrane. The enzyme catalyses di-trans,octa-cis-undecaprenyl diphosphate + H2O = di-trans,octa-cis-undecaprenyl phosphate + phosphate + H(+). Functionally, catalyzes the dephosphorylation of undecaprenyl diphosphate (UPP). Confers resistance to bacitracin. The sequence is that of Undecaprenyl-diphosphatase from Bacteroides fragilis (strain YCH46).